Consider the following 99-residue polypeptide: Aspartyl/glutamyl-tRNA(Asn/Gln) amidotransferase subunit C (99 aa).

The protein belongs to the GatC family. In terms of assembly, heterotrimer of A, B and C subunits.

It catalyses the reaction L-glutamyl-tRNA(Gln) + L-glutamine + ATP + H2O = L-glutaminyl-tRNA(Gln) + L-glutamate + ADP + phosphate + H(+). The enzyme catalyses L-aspartyl-tRNA(Asn) + L-glutamine + ATP + H2O = L-asparaginyl-tRNA(Asn) + L-glutamate + ADP + phosphate + 2 H(+). In terms of biological role, allows the formation of correctly charged Asn-tRNA(Asn) or Gln-tRNA(Gln) through the transamidation of misacylated Asp-tRNA(Asn) or Glu-tRNA(Gln) in organisms which lack either or both of asparaginyl-tRNA or glutaminyl-tRNA synthetases. The reaction takes place in the presence of glutamine and ATP through an activated phospho-Asp-tRNA(Asn) or phospho-Glu-tRNA(Gln). The chain is Aspartyl/glutamyl-tRNA(Asn/Gln) amidotransferase subunit C from Bifidobacterium longum (strain NCC 2705).